The primary structure comprises 456 residues: MEPRCPPPCGCCERLVLNVAGLRFETRARTLGRFPDTLLGDPARRGRFYDDARREYFFDRHRPSFDAVLYYYQSGGRLRRPAHVPLDVFLEEVAFYGLGAAALARLREDEGCPVPPERPLPRRAFARQLWLLFEFPESSQAARVLAVVSVLVILVSIVVFCLETLPDFRDDRDGTGLAAAAAAGPFPAPLNGSSQMPGNPPRLPFNDPFFVVETLCICWFSFELLVRLLVCPSKAIFFKNVMNLIDFVAILPYFVALGTELARQRGVGQQAMSLAILRVIRLVRVFRIFKLSRHSKGLQILGQTLRASMRELGLLIFFLFIGVVLFSSAVYFAEVDRVDSHFTSIPESFWWAVVTMTTVGYGDMAPVTVGGKIVGSLCAIAGVLTISLPVPVIVSNFSYFYHRETEGEEAGMFSHVDMQPCGPLEGKANGGLVDGEVPELPPPLWAPPGKHLVTEV.

The chain crosses the membrane as a helical span at residues 144-164 (VLAVVSVLVILVSIVVFCLET). N-linked (GlcNAc...) asparagine glycosylation is present at Asn-191. The helical transmembrane segment at 209 to 229 (FFVVETLCICWFSFELLVRLL) threads the bilayer. The S-palmitoyl cysteine moiety is linked to residue Cys-231. A helical membrane pass occupies residues 241 to 261 (VMNLIDFVAILPYFVALGTEL). Residues 276–295 (ILRVIRLVRVFRIFKLSRHS) traverse the membrane as a helical; Voltage-sensor segment. A helical transmembrane segment spans residues 312 to 332 (LGLLIFFLFIGVVLFSSAVYF). Positions 358 to 363 (TVGYGD) match the Selectivity filter motif. A helical transmembrane segment spans residues 373–393 (IVGSLCAIAGVLTISLPVPVI).

It belongs to the potassium channel family. A (Shaker) (TC 1.A.1.2) subfamily. Kv1.7/KCNA7 sub-subfamily. As to quaternary structure, heterotetramer of potassium channel proteins. As to expression, highly expressed in skeletal muscle, heart and kidney.

The protein localises to the membrane. The catalysed reaction is K(+)(in) = K(+)(out). Its function is as follows. Mediates the voltage-dependent potassium ion permeability of excitable membranes. Assuming opened or closed conformations in response to the voltage difference across the membrane, the protein forms a potassium-selective channel through which potassium ions may pass in accordance with their electrochemical gradient. The sequence is that of Potassium voltage-gated channel subfamily A member 7 (KCNA7) from Homo sapiens (Human).